Reading from the N-terminus, the 171-residue chain is MVKLNGNPGEKGAKPPSVEDGFQTVPLITPLEVNHLQLSAPEKVIVKTRTEYQPEQRNKGKFRVPKIAEFTVTILVSLALAFLACIVFLVVYKAFTYDHSCPEGFVYKHKRCIPASLDAYYSSQDPSSRSRFYTVISHYSVAKQSTARAIGPWLSAAAVIHEPKPPKTQGH.

Positions 1–21 (MVKLNGNPGEKGAKPPSVEDG) are disordered. Topologically, residues 1–71 (MVKLNGNPGE…FRVPKIAEFT (71 aa)) are cytoplasmic. A helical; Signal-anchor for type II membrane protein transmembrane segment spans residues 72–92 (VTILVSLALAFLACIVFLVVY). Residues 93-171 (KAFTYDHSCP…EPKPPKTQGH (79 aa)) are Lumenal-facing.

Belongs to the NSG family.

The protein resides in the membrane. The protein localises to the golgi apparatus. Its subcellular location is the trans-Golgi network membrane. It localises to the cell projection. It is found in the dendrite. The protein resides in the endosome membrane. The protein localises to the early endosome membrane. Its subcellular location is the late endosome membrane. It localises to the lysosome lumen. It is found in the cytoplasmic vesicle membrane. The protein resides in the golgi stack membrane. The protein localises to the endosome. Its subcellular location is the multivesicular body membrane. The sequence is that of Neuronal vesicle trafficking-associated protein 2 from Rattus norvegicus (Rat).